The sequence spans 406 residues: Calreticulin (406 aa).

Residues 1 to 17 form the signal peptide; it reads MMWCKTVIVLLATVGFI. The cysteines at positions 105 and 137 are disulfide-linked. Residues Y109, K111, Y128, and D135 each contribute to the an alpha-D-glucoside site. 7 consecutive repeat copies span residues 191 to 202, 210 to 221, 227 to 238, 244 to 255, 259 to 269, 273 to 283, and 287 to 297. Residues 191–255 form a 4 X approximate repeats region; it reads VESGNLEDDW…DATKPEDWDD (65 aa). Residues 207–251 are compositionally biased toward basic and acidic residues; the sequence is KIKDPTATKPEDWDDRATIPDPDDKKPEDWDKPEHIPDPDATKPE. Residues 207 to 259 form a disordered region; that stretch reads KIKDPTATKPEDWDDRATIPDPDDKKPEDWDKPEHIPDPDATKPEDWDDEMDG. Residues 259–297 are 3 X approximate repeats; it reads GEWEPPMIDNPEFKGEWQPKQLDNPNYKGAWEHPEIANP. D317 lines the an alpha-D-glucoside pocket. The tract at residues 347 to 406 is disordered; that stretch reads KNTQAGEKKMKEAQDEVQRKKDEEEAKKASDKDDEDEDDDDEEKDDESKQDKDQSEHDEL. A compositionally biased stretch (basic and acidic residues) spans 352–377; the sequence is GEKKMKEAQDEVQRKKDEEEAKKASD. Positions 378-391 are enriched in acidic residues; it reads KDDEDEDDDDEEKD. The segment covering 392–406 has biased composition (basic and acidic residues); the sequence is DESKQDKDQSEHDEL.

It belongs to the calreticulin family.

It is found in the endoplasmic reticulum lumen. Its function is as follows. Molecular calcium-binding chaperone promoting folding, oligomeric assembly and quality control in the ER via the calreticulin/calnexin cycle. This lectin may interact transiently with almost all of the monoglucosylated glycoproteins that are synthesized in the ER. In Drosophila melanogaster (Fruit fly), this protein is Calreticulin.